The primary structure comprises 393 residues: NAD(P)H-quinone oxidoreductase subunit H, chloroplastic (393 aa).

It belongs to the complex I 49 kDa subunit family. As to quaternary structure, NDH is composed of at least 16 different subunits, 5 of which are encoded in the nucleus.

It is found in the plastid. The protein localises to the chloroplast thylakoid membrane. It carries out the reaction a plastoquinone + NADH + (n+1) H(+)(in) = a plastoquinol + NAD(+) + n H(+)(out). The catalysed reaction is a plastoquinone + NADPH + (n+1) H(+)(in) = a plastoquinol + NADP(+) + n H(+)(out). Functionally, NDH shuttles electrons from NAD(P)H:plastoquinone, via FMN and iron-sulfur (Fe-S) centers, to quinones in the photosynthetic chain and possibly in a chloroplast respiratory chain. The immediate electron acceptor for the enzyme in this species is believed to be plastoquinone. Couples the redox reaction to proton translocation, and thus conserves the redox energy in a proton gradient. This is NAD(P)H-quinone oxidoreductase subunit H, chloroplastic from Solanum lycopersicum (Tomato).